A 174-amino-acid chain; its full sequence is MLRIAVTGIPGIGKSTVVAKAAEKLADQPGFKIGGIQTAEIRKEGQREGFSIMDLATGKTGVLGSIRESGPRVGKYHVNLEDLEKIGANALRSAMDCDLIVIDEVGTMELKSEAFVSAVKVVLESDKPVLAVLHRSSSHQLVQRMRREFEVLVVNEKNRDGLPGKIANRFREMR.

ATP contacts are provided by residues 8-15 (GIPGIGKS) and 99-106 (LIVIDEVG).

It belongs to the THEP1 NTPase family.

It carries out the reaction a ribonucleoside 5'-triphosphate + H2O = a ribonucleoside 5'-diphosphate + phosphate + H(+). Has nucleotide phosphatase activity towards ATP, GTP, CTP, TTP and UTP. May hydrolyze nucleoside diphosphates with lower efficiency. The chain is Nucleoside-triphosphatase THEP1 from Methanosarcina barkeri (strain Fusaro / DSM 804).